Here is a 292-residue protein sequence, read N- to C-terminus: Phosphatidylglycerol--prolipoprotein diacylglyceryl transferase (292 aa).

The next 3 membrane-spanning stretches (helical) occupy residues 18 to 38, 67 to 87, and 105 to 125; these read LFGVTFALRWYALAYIAGLLI, LLTWVILGVILGGRLGFVLFY, and GGMSFHGGFLGVMTALVAFCL. Arginine 150 is an a 1,2-diacyl-sn-glycero-3-phospho-(1'-sn-glycerol) binding site. Transmembrane regions (helical) follow at residues 193 to 213, 222 to 242, and 266 to 286; these read QIYEAGLEGILLFAVLSLLVW, GSVSGMFLAGYGATRFLVEFV, and GLTMGQILSLPMILLGLYLIL.

The protein belongs to the Lgt family.

It is found in the cell inner membrane. The enzyme catalyses L-cysteinyl-[prolipoprotein] + a 1,2-diacyl-sn-glycero-3-phospho-(1'-sn-glycerol) = an S-1,2-diacyl-sn-glyceryl-L-cysteinyl-[prolipoprotein] + sn-glycerol 1-phosphate + H(+). The protein operates within protein modification; lipoprotein biosynthesis (diacylglyceryl transfer). Catalyzes the transfer of the diacylglyceryl group from phosphatidylglycerol to the sulfhydryl group of the N-terminal cysteine of a prolipoprotein, the first step in the formation of mature lipoproteins. In Cereibacter sphaeroides (strain ATCC 17029 / ATH 2.4.9) (Rhodobacter sphaeroides), this protein is Phosphatidylglycerol--prolipoprotein diacylglyceryl transferase.